The primary structure comprises 483 residues: Altronate oxidoreductase (483 aa).

Residue 18 to 29 participates in NAD(+) binding; the sequence is IIQFGEGNFLRA.

It belongs to the mannitol dehydrogenase family. UxaB subfamily.

The enzyme catalyses D-altronate + NAD(+) = keto-D-tagaturonate + NADH + H(+). The protein operates within carbohydrate metabolism; pentose and glucuronate interconversion. The sequence is that of Altronate oxidoreductase from Escherichia coli O7:K1 (strain IAI39 / ExPEC).